The chain runs to 2009 residues: Sodium channel protein type 1 subunit alpha (2009 aa).

Over 1-128 (MEQTVLVPPG…KIAIKILVHS (128 aa)) the chain is Cytoplasmic. Residues 28–48 (RIAEEKAKNPKPDKKDDDENG) show a composition bias toward basic and acidic residues. Residues 28 to 60 (RIAEEKAKNPKPDKKDDDENGPKPNSDLEAGKN) form a disordered region. One copy of the I repeat lies at 110–454 (ILTPFNPLRK…QQMLEQLKKQ (345 aa)). Residues 129-146 (LFSMLIMCTILTNCVFMT) form a helical membrane-spanning segment. Topologically, residues 147 to 152 (MSNPPD) are extracellular. The helical transmembrane segment at 153–177 (WTKNVEYTFTGIYTFESLIKIIARG) threads the bilayer. Topologically, residues 178–188 (FCLEDFTFLRD) are cytoplasmic. A helical membrane pass occupies residues 189 to 205 (PWNWLDFTVITFAYVTE). At 206–213 (FVDLGNVS) the chain is on the extracellular side. Residues 214–235 (ALRTFRVLRALKTISVIPGLKT) form a helical membrane-spanning segment. The Cytoplasmic portion of the chain corresponds to 236–245 (IVGALIQSVK). A helical membrane pass occupies residues 246-269 (KLSDVMILTVFCLSVFALIGLQLF). Over 270 to 369 (MGNLRNKCVQ…YGYTSFDTFS (100 aa)) the chain is Extracellular. 2 disulfides stabilise this stretch: C277-C345 and C336-C351. N-linked (GlcNAc...) asparagine glycosylation is found at N295, N301, N306, and N338. The segment at residues 370-384 (WAFLSLFRLMTQDFW) is an intramembrane region (pore-forming). Residues 385-397 (ENLYQLTLRAAGK) lie on the Extracellular side of the membrane. Residues 398–423 (TYMIFFVLVIFLGSFYLINLILAVVA) traverse the membrane as a helical segment. Topologically, residues 424-768 (MAYEEQNQAT…HIVNLVVMDP (345 aa)) are cytoplasmic. The segment at 455–528 (QEAAQQAAAT…EFHKSESEDS (74 aa)) is disordered. Residues 456-466 (EAAQQAAATTA) are compositionally biased toward low complexity. S470 carries the post-translational modification Phosphoserine. Over residues 479 to 492 (LSDSSSEASKLSSK) the composition is skewed to low complexity. The span at 495 to 506 (KERRNRRKKRKQ) shows a compositional bias: basic residues. Basic and acidic residues predominate over residues 507–528 (KEQSGGEEKDDDEFHKSESEDS). Residues S523, S525, S550, S551, S607, and S730 each carry the phosphoserine modification. Residues 584–627 (VGSENDFADDEHSTFEDNESRRDSLFVPRRHGERRNSNLSQTSR) are disordered. Residues 593–607 (DEHSTFEDNESRRDS) show a composition bias toward basic and acidic residues. An II repeat occupies 750–1022 (CSPYWLKVKH…QIAVDRMHKG (273 aa)). A helical transmembrane segment spans residues 769 to 787 (FVDLAITICIVLNTLFMAM). The Extracellular segment spans residues 788-797 (EHYPMTEHFN). A helical membrane pass occupies residues 798–820 (HVLTVGNLVFTGIFTAEMFLKII). Topologically, residues 821–830 (AMDPYYYFQE) are cytoplasmic. Residues 831 to 849 (GWNIFDGFIVTLSLVELGL) form a helical membrane-spanning segment. The Extracellular portion of the chain corresponds to 850 to 854 (ANVEG). Residues 855–874 (LSVLRSFRLLRVFKLAKSWP) form a helical membrane-spanning segment. Over 875 to 891 (TLNMLIKIIGNSVGALG) the chain is Cytoplasmic. A helical membrane pass occupies residues 892 to 912 (NLTLVLAIIVFIFAVVGMQLF). Over 913–938 (GKSYKDCVCKIATDCKLPRWHMNDFF) the chain is Extracellular. A disulfide bridge connects residues C921 and C927. An intramembrane region (pore-forming) is located at residues 939-952 (HSFLIVFRVLCGEW). Residues 953-965 (IETMWDCMEVAGQ) are Extracellular-facing. A disulfide bridge connects residues C959 and C968. The helical transmembrane segment at 966-992 (AMCLTVFMMVMVIGNLVVLNLFLALLL) threads the bilayer. The Cytoplasmic segment spans residues 993 to 1218 (SSFSADNLAA…RTCFRIVEHN (226 aa)). The disordered stretch occupies residues 1129 to 1163 (TEDFSSESDLEESKEKLNESSSSSEGSTVDIGAPA). One copy of the III repeat lies at 1200–1514 (RGKQWWNLRR…KKYYNAMKKL (315 aa)). A helical transmembrane segment spans residues 1219–1237 (WFETFIVFMILLSSGALAF). The Extracellular portion of the chain corresponds to 1238 to 1250 (EDIYIDQRKTIKT). The helical transmembrane segment at 1251–1276 (MLEYADKVFTYIFILEMLLKWVAYGY) threads the bilayer. The Cytoplasmic segment spans residues 1277–1278 (QT). The helical transmembrane segment at 1279 to 1304 (YFTNAWCWLDFLIVDVSLVSLTANAL) threads the bilayer. At 1305 to 1313 (GYSELGAIK) the chain is on the extracellular side. A helical membrane pass occupies residues 1314-1332 (SLRTLRALRPLRALSRFEG). The Cytoplasmic segment spans residues 1333 to 1345 (MRVVVNALLGAIP). Residues 1346 to 1369 (SIMNVLLVCLIFWLIFSIMGVNLF) form a helical membrane-spanning segment. The Extracellular portion of the chain corresponds to 1370–1415 (AGKFYHCVNTTTGDIFEISEVNNHSDCLKLIERNETARWKNVKVNF). A disulfide bond links C1376 and C1396. An intramembrane region (pore-forming) is located at residues 1416–1433 (DNVGFGYLSLLQVATFKG). Residues 1434–1457 (WMDIMYAAVDSRNVELQPKYEESL) are Extracellular-facing. The helical transmembrane segment at 1458 to 1483 (YMYLYFVIFIIFGSFFTLNLFIGVII) threads the bilayer. Residues 1484 to 1541 (DNFNQQKKKFGGQDIFMTEEQKKYYNAMKKLGSKKPQKPIPRPGNKFQGMVFDFVTRQ) are Cytoplasmic-facing. Position 1516 is a phosphoserine; by PKC (S1516). One copy of the IV repeat lies at 1523 to 1821 (IPRPGNKFQG…WEKFDPDATQ (299 aa)). The chain crosses the membrane as a helical span at residues 1542–1560 (VFDISIMILICLNMVTMMV). Topologically, residues 1561 to 1571 (ETDDQSDYVTS) are extracellular. The tract at residues 1561 to 1571 (ETDDQSDYVTS) is S1-S2 loop of repeat IV. A helical transmembrane segment spans residues 1572-1593 (ILSRINLVFIVLFTGECVLKLI). The Cytoplasmic portion of the chain corresponds to 1594–1601 (SLRHYYFT). The chain crosses the membrane as a helical span at residues 1602 to 1623 (IGWNIFDFVVVILSIVGMFLAE). The S3b-S4 loop of repeat IV stretch occupies residues 1619–1636 (MFLAELIEKYFVSPTLFR). Residues 1624 to 1636 (LIEKYFVSPTLFR) are Extracellular-facing. Residues 1637-1655 (VIRLARIGRILRLIKGAKG) traverse the membrane as a helical segment. The Cytoplasmic segment spans residues 1656–1665 (IRTLLFALMM). A helical membrane pass occupies residues 1666 to 1688 (SLPALFNIGLLLFLVMFIYAIFG). The Extracellular portion of the chain corresponds to 1689 to 1711 (MSNFAYVKREVGIDDMFNFETFG). The pore-forming intramembrane region spans 1712-1726 (NSMICLFQITTSAGW). Over 1727–1759 (DGLLAPILNSKPPDCDPNKVNPGSSVKGDCGNP) the chain is Extracellular. A disulfide bond links C1741 and C1756. Residues 1760–1788 (SVGIFFFVSYIIISFLVVVNMYIAVILEN) traverse the membrane as a helical segment. Residues 1789-2009 (FSVATEESAE…EGKDEKAKGK (221 aa)) lie on the Cytoplasmic side of the membrane. Positions 1915 to 1944 (EEVSAVIIQRAYRRHLLKRTVKQASFTYNK) constitute an IQ domain. Residues 1984 to 2009 (PSYDRVTKPIVEKHEQEGKDEKAKGK) are disordered. The span at 1988 to 2009 (RVTKPIVEKHEQEGKDEKAKGK) shows a compositional bias: basic and acidic residues.

It belongs to the sodium channel (TC 1.A.1.10) family. Nav1.1/SCN1A subfamily. The Nav1.1 voltage-gated sodium channel consists of an ion-conducting alpha subunit SCN1A which is functional on its own regulated by one or more beta-1 (SCN1B), beta-2 (SCN2B), beta-3 (SCN3B) and beta-4 (SCN4B) subunits. SCN1B and SCN3B are non-covalently associated with SCN1A. SCN2B and SCN4B are disulfide-linked to SCN1A. SCN1B regulates both the expression at the plasma membrane and the voltage dependence of Nav1.1 inactivation. SCN3B and SCN4B reduce Nav1.1 conductance. Probably interacts with TMEM233; modulates the gating properties of NaV1.1. Interacts with FGF13; regulates the steady-state inactivation of Nav.1.1. Phosphorylation at Ser-1516 by PKC in a highly conserved cytoplasmic loop slows inactivation of the sodium channel and reduces peak sodium currents. As to expression, present in cerebellar Purkinje neurons (at protein level). Expressed by myelinated, non-C-fiber neurons in sensory ganglia.

It localises to the cell membrane. The catalysed reaction is Na(+)(in) = Na(+)(out). Activated by the spider toxins Hm1a and Hm1b (H.maculata, AC P60992 and AC P0DOC5) eliciting acute pain and mechanical allodynia. In terms of biological role, pore-forming subunit of Nav1.1, a voltage-gated sodium (Nav) channel that directly mediates the depolarizing phase of action potentials in excitable membranes. Navs, also called VGSCs (voltage-gated sodium channels) or VDSCs (voltage-dependent sodium channels), operate by switching between closed and open conformations depending on the voltage difference across the membrane. In the open conformation they allow Na(+) ions to selectively pass through the pore, along their electrochemical gradient. The influx of Na(+) ions provokes membrane depolarization, initiating the propagation of electrical signals throughout cells and tissues. By regulating the excitability of neurons, ensures that they respond appropriately to synaptic inputs, maintaining the balance between excitation and inhibition in brain neural circuits. Nav1.1 plays a role in controlling the excitability and action potential propagation from somatosensory neurons, thereby contributing to the sensory perception of mechanically-induced pain. The polypeptide is Sodium channel protein type 1 subunit alpha (Mus musculus (Mouse)).